Consider the following 217-residue polypeptide: Superoxide dismutase [Mn], mitochondrial (217 aa).

The N-terminal 17 residues, methionine 1–glycine 17, are a transit peptide targeting the mitochondrion. Residues histidine 43, histidine 91, aspartate 175, and histidine 179 each contribute to the Mn(2+) site.

This sequence belongs to the iron/manganese superoxide dismutase family. Homotetramer. The cofactor is Mn(2+).

The protein localises to the mitochondrion matrix. The enzyme catalyses 2 superoxide + 2 H(+) = H2O2 + O2. In terms of biological role, destroys superoxide anion radicals which are normally produced within the cells and which are toxic to biological systems. The chain is Superoxide dismutase [Mn], mitochondrial (Sod2) from Drosophila melanogaster (Fruit fly).